Reading from the N-terminus, the 115-residue chain is Large ribosomal subunit protein bL19 (115 aa).

The protein belongs to the bacterial ribosomal protein bL19 family.

Its function is as follows. This protein is located at the 30S-50S ribosomal subunit interface and may play a role in the structure and function of the aminoacyl-tRNA binding site. This Latilactobacillus sakei subsp. sakei (strain 23K) (Lactobacillus sakei subsp. sakei) protein is Large ribosomal subunit protein bL19.